The primary structure comprises 668 residues: RING finger protein 214 (668 aa).

Disordered regions lie at residues 1-87 (MAAS…AHEE) and 103-125 (NGSQ…TSLR). Alanine 2 is subject to N-acetylalanine. 4 positions are modified to phosphoserine: serine 15, serine 40, serine 48, and serine 54. The span at 43 to 59 (KQKNLSPPSVSSQMITK) shows a compositional bias: polar residues. The segment covering 60 to 71 (ESNRNAHLEHPE) has biased composition (basic and acidic residues). Position 196 is a phosphoserine (serine 196). A coiled-coil region spans residues 220–379 (QDIEKNLDKM…AEKEAELHLT (160 aa)). The interval 486-552 (FPILNPALSQ…SSETPRPQPV (67 aa)) is disordered. Serine 497, serine 511, and serine 516 each carry phosphoserine. Positions 523–536 (PHMPPAASIPPPPG) are enriched in pro residues. Residues 623–665 (CLMCQKLVQPSELHPMACTHALHKECIKFWAQTNTNDTCPFCP) form an RING-type; atypical zinc finger.

The chain is RING finger protein 214 (Rnf214) from Mus musculus (Mouse).